Consider the following 620-residue polypeptide: Phosphopentomutase (620 aa).

Arg-71 and Ser-173 together coordinate alpha-D-glucose 1,6-bisphosphate. Ser-173 functions as the Phosphoserine intermediate in the catalytic mechanism. Mg(2+) contacts are provided by Ser-173, Asp-330, Asp-332, and Asp-334. Position 173 is a phosphoserine (Ser-173). The alpha-D-glucose 1,6-bisphosphate site is built by Asp-334, Arg-335, Thr-408, Glu-432, and Lys-446.

The protein belongs to the phosphohexose mutase family. Monomer. Mg(2+) serves as cofactor. In terms of tissue distribution, highly expressed in lung, spleen and thymus. Expressed at lower levels in liver, brain, kidney, skeletal muscle, testis and heart.

Its subcellular location is the cytoplasm. It localises to the cytosol. The catalysed reaction is alpha-D-ribose 1-phosphate = D-ribose 5-phosphate. The enzyme catalyses 2-deoxy-alpha-D-ribose 1-phosphate = 2-deoxy-D-ribose 5-phosphate. It catalyses the reaction alpha-D-glucose 1-phosphate = alpha-D-glucose 6-phosphate. It carries out the reaction O-phospho-L-seryl-[protein] + alpha-D-glucose 1-phosphate = alpha-D-glucose 1,6-bisphosphate + L-seryl-[protein]. The catalysed reaction is alpha-D-glucose 1,6-bisphosphate + L-seryl-[protein] = O-phospho-L-seryl-[protein] + alpha-D-glucose 6-phosphate. Its function is as follows. Catalyzes the conversion of the nucleoside breakdown products ribose-1-phosphate and deoxyribose-1-phosphate to the corresponding 5-phosphopentoses. Catalyzes the reversible isomerization of alpha-D-glucose 1-phosphate to alpha-D-glucose 6-phosphate but with a lower catalytic efficiency. The mechanism proceeds via the intermediate compound alpha-D-glucose 1,6-bisphosphate. In vitro, also has a low glucose 1,6-bisphosphate synthase activity which is most probably not physiologically relevant. The sequence is that of Phosphopentomutase from Mus musculus (Mouse).